The sequence spans 296 residues: LysM and putative peptidoglycan-binding domain-containing protein 4 (296 aa).

Residues 1-217 are Extracellular-facing; it reads MRHEELLTKT…PMDGADCGIQ (217 aa). A disordered region spans residues 29–67; the sequence is KNGSGDSGDSSEEESHRVVLRPRGKERHKSGVHQPPQAG. Residue Asn30 is glycosylated (N-linked (GlcNAc...) asparagine). A compositionally biased stretch (basic residues) spans 46 to 59; sequence VVLRPRGKERHKSG. A LysM domain is found at 74–118; the sequence is LQRELAQEDSLNKLALQYGCKVADIKKVNNFIREQDLYALKSVKI. A helical transmembrane segment spans residues 218–238; the sequence is WWNAVFIMLLIGIVLPVFYLV. The Cytoplasmic portion of the chain corresponds to 239–296; that stretch reads YFKIQASGETPNSLNTTVIPNGSMAMGTVPGQAPRLAVAVPAVTSADSQFSQTTQAGS.

The protein resides in the membrane. The polypeptide is LysM and putative peptidoglycan-binding domain-containing protein 4 (LYSMD4) (Homo sapiens (Human)).